Consider the following 214-residue polypeptide: Peptidyl-tRNA hydrolase (214 aa).

Residue tyrosine 14 coordinates tRNA. Residue histidine 19 is the Proton acceptor of the active site. Residues tyrosine 64, asparagine 66, and asparagine 113 each contribute to the tRNA site. Residues 184–214 (RINAPPPKPEKKRGSETSDPSAESADHAGGG) are disordered.

The protein belongs to the PTH family. Monomer.

The protein localises to the cytoplasm. It catalyses the reaction an N-acyl-L-alpha-aminoacyl-tRNA + H2O = an N-acyl-L-amino acid + a tRNA + H(+). Functionally, hydrolyzes ribosome-free peptidyl-tRNAs (with 1 or more amino acids incorporated), which drop off the ribosome during protein synthesis, or as a result of ribosome stalling. Its function is as follows. Catalyzes the release of premature peptidyl moieties from peptidyl-tRNA molecules trapped in stalled 50S ribosomal subunits, and thus maintains levels of free tRNAs and 50S ribosomes. The chain is Peptidyl-tRNA hydrolase from Roseiflexus castenholzii (strain DSM 13941 / HLO8).